Reading from the N-terminus, the 128-residue chain is Arginine decarboxylase proenzyme (128 aa).

Ser76 serves as the catalytic Schiff-base intermediate with substrate; via pyruvic acid. Ser76 is modified (pyruvic acid (Ser); by autocatalysis). Residue His81 is the Proton acceptor; for processing activity of the active site. Catalysis depends on Cys96, which acts as the Proton donor; for catalytic activity.

It belongs to the prokaryotic AdoMetDC family. Type 1 subfamily. In terms of assembly, heterooctamer of four alpha and four beta chains arranged as a tetramer of alpha/beta heterodimers. It depends on pyruvate as a cofactor. Post-translationally, is synthesized initially as an inactive proenzyme. Formation of the active enzyme involves a self-maturation process in which the active site pyruvoyl group is generated from an internal serine residue via an autocatalytic post-translational modification. Two non-identical subunits are generated from the proenzyme in this reaction, and the pyruvate is formed at the N-terminus of the alpha chain, which is derived from the carboxyl end of the proenzyme. The post-translation cleavage follows an unusual pathway, termed non-hydrolytic serinolysis, in which the side chain hydroxyl group of the serine supplies its oxygen atom to form the C-terminus of the beta chain, while the remainder of the serine residue undergoes an oxidative deamination to produce ammonia and the pyruvoyl group blocking the N-terminus of the alpha chain.

The enzyme catalyses L-arginine + H(+) = agmatine + CO2. It participates in amine and polyamine biosynthesis; agmatine biosynthesis; agmatine from L-arginine: step 1/1. In terms of biological role, specifically catalyzes the decarboxylation of L-arginine to agmatine. Has no S-adenosylmethionine decarboxylase (AdoMetDC) activity. The sequence is that of Arginine decarboxylase proenzyme from Metallosphaera sedula (strain ATCC 51363 / DSM 5348 / JCM 9185 / NBRC 15509 / TH2).